Here is a 581-residue protein sequence, read N- to C-terminus: Lipoprotein LpqB (581 aa).

Positions 1 to 23 (MRNHVSRYLTALIAVGCAATTAA) are cleaved as a signal peptide. A lipid anchor (N-palmitoyl cysteine) is attached at Cys-24. Cys-24 carries the S-diacylglycerol cysteine lipid modification.

This sequence belongs to the LpqB lipoprotein family.

Its subcellular location is the cell membrane. In Corynebacterium diphtheriae (strain ATCC 700971 / NCTC 13129 / Biotype gravis), this protein is Lipoprotein LpqB.